The sequence spans 318 residues: Pseudouridine-5'-phosphate glycosidase 1 (318 aa).

The active-site Proton donor is Glu29. Substrate-binding residues include Lys90 and Val110. Asp142 is a Mn(2+) binding site. Residue 144-146 (SAD) coordinates substrate. Lys163 acts as the Nucleophile in catalysis.

This sequence belongs to the pseudouridine-5'-phosphate glycosidase family. Homotrimer. Requires Mn(2+) as cofactor.

The enzyme catalyses D-ribose 5-phosphate + uracil = psi-UMP + H2O. Its function is as follows. Catalyzes the reversible cleavage of pseudouridine 5'-phosphate (PsiMP) to ribose 5-phosphate and uracil. Functions biologically in the cleavage direction, as part of a pseudouridine degradation pathway. In Photorhabdus laumondii subsp. laumondii (strain DSM 15139 / CIP 105565 / TT01) (Photorhabdus luminescens subsp. laumondii), this protein is Pseudouridine-5'-phosphate glycosidase 1.